The primary structure comprises 192 residues: CASP-like protein 1E1 (192 aa).

Residues 1 to 22 (MDSQNKNSVDAMDGIESRGMKE) are disordered. Topologically, residues 1–29 (MDSQNKNSVDAMDGIESRGMKERGGRTNS) are cytoplasmic. Residues 30 to 50 (FLVLRVLAFVLTSTAAIVHGV) traverse the membrane as a helical segment. The Extracellular segment spans residues 51-81 (NNQTETVPIQLTSSMPPLYVPVVAKWHYLSA). An N-linked (GlcNAc...) asparagine glycan is attached at Asn52. A helical membrane pass occupies residues 82–102 (FVFFVVSNAIACSYAAISVML). The Cytoplasmic portion of the chain corresponds to 103 to 118 (SFCGKKSMVPIILTLD). The chain crosses the membrane as a helical span at residues 119 to 139 (LLMVALLFSSNGAATAIGVMG). Residues 140–161 (YKGNSHVKWNKVCNVFGKFCNQ) lie on the Extracellular side of the membrane. Residues 162–182 (VAASVVLSLIGSIVFVLLVML) form a helical membrane-spanning segment. The Cytoplasmic segment spans residues 183–192 (TAFRLHNKSK).

Belongs to the Casparian strip membrane proteins (CASP) family. In terms of assembly, homodimer and heterodimers.

It is found in the cell membrane. The protein is CASP-like protein 1E1 of Ricinus communis (Castor bean).